The primary structure comprises 880 residues: DNA-directed RNA polymerase subunit Rpo1N (880 aa).

Residues C58, C61, C68, H71, C98, C101, C146, and C149 each contribute to the Zn(2+) site. Mg(2+)-binding residues include D456, D458, and D460. Zn(2+) contacts are provided by R573, C575, C580, H582, and S584.

The protein belongs to the RNA polymerase beta' chain family. Part of the 13-subunit RNA polymerase complex. Interacts with TFS4. In terms of assembly, (Microbial infection) Binds viral protein RIP, which blocks global transcription. The cofactor is Mg(2+). Requires Zn(2+) as cofactor.

It localises to the cytoplasm. It catalyses the reaction RNA(n) + a ribonucleoside 5'-triphosphate = RNA(n+1) + diphosphate. With respect to regulation, (Microbial infection) Binds to viral protein RIP (AC Q3V4R7), which inhibits global transcription. In terms of biological role, DNA-dependent RNA polymerase (RNAP) catalyzes the transcription of DNA into RNA using the four ribonucleoside triphosphates as substrates. Forms the clamp head domain. The polypeptide is DNA-directed RNA polymerase subunit Rpo1N (Sulfolobus acidocaldarius (strain ATCC 33909 / DSM 639 / JCM 8929 / NBRC 15157 / NCIMB 11770)).